Here is a 223-residue protein sequence, read N- to C-terminus: Ribosome assembly factor mrt4 (223 aa).

The protein belongs to the universal ribosomal protein uL10 family. As to quaternary structure, associates with the pre-60S ribosomal particle.

Its subcellular location is the nucleus. The protein resides in the nucleolus. It localises to the cytoplasm. Its function is as follows. Component of the ribosome assembly machinery. Nuclear paralog of the ribosomal protein P0, it binds pre-60S subunits at an early stage of assembly in the nucleolus, and is replaced by P0 in cytoplasmic pre-60S subunits and mature 80S ribosomes. In Dictyostelium discoideum (Social amoeba), this protein is Ribosome assembly factor mrt4.